A 246-amino-acid chain; its full sequence is 3-deoxy-manno-octulosonate cytidylyltransferase (246 aa).

It belongs to the KdsB family.

It localises to the cytoplasm. It catalyses the reaction 3-deoxy-alpha-D-manno-oct-2-ulosonate + CTP = CMP-3-deoxy-beta-D-manno-octulosonate + diphosphate. The protein operates within nucleotide-sugar biosynthesis; CMP-3-deoxy-D-manno-octulosonate biosynthesis; CMP-3-deoxy-D-manno-octulosonate from 3-deoxy-D-manno-octulosonate and CTP: step 1/1. It functions in the pathway bacterial outer membrane biogenesis; lipopolysaccharide biosynthesis. Activates KDO (a required 8-carbon sugar) for incorporation into bacterial lipopolysaccharide in Gram-negative bacteria. The polypeptide is 3-deoxy-manno-octulosonate cytidylyltransferase (Rickettsia prowazekii (strain Madrid E)).